The chain runs to 523 residues: Maintenance of mitochondrial morphology protein 1 (523 aa).

Topologically, residues 1-43 (MAGSTSASLQTPYFPSSTQINPVRVDHTLPLPPSQPSLSFTQG) are lumenal. A helical transmembrane segment spans residues 44-64 (LLVGQLSVVLLIGAFIKFFIF). Over 65–523 (GEAPPPPSRG…GSMPDTVTET (459 aa)) the chain is Cytoplasmic. Disordered regions lie at residues 70-118 (PPSR…SSST), 128-147 (YYSA…RLYH), 295-349 (TSDQ…SKHG), 420-474 (RTGL…DRGL), and 492-523 (GGHQ…VTET). 2 stretches are compositionally biased toward polar residues: residues 74 to 96 (GLSN…TDSS) and 105 to 118 (STSN…SSST). Over residues 137 to 147 (TPKHGRPRLYH) the composition is skewed to basic residues. Positions 151–412 (QPESLDWFNV…EPRVQVVGLP (262 aa)) constitute an SMP-LTD domain. The span at 295 to 312 (TSDQTMSPIPTPHDTTSE) shows a compositional bias: polar residues. The span at 449–468 (GVSGGGGSGGGSGGGGGGMR) shows a compositional bias: gly residues.

This sequence belongs to the MMM1 family. Homodimer. Component of the ER-mitochondria encounter structure (ERMES) or MDM complex, composed of MMM1, MDM10, MDM12 and MDM34. An MMM1 homodimer associates with one molecule of MDM12 on each side in a pairwise head-to-tail manner, and the SMP-LTD domains of MMM1 and MDM12 generate a continuous hydrophobic tunnel for phospholipid trafficking.

The protein localises to the endoplasmic reticulum membrane. Its function is as follows. Component of the ERMES/MDM complex, which serves as a molecular tether to connect the endoplasmic reticulum (ER) and mitochondria. Components of this complex are involved in the control of mitochondrial shape and protein biogenesis, and function in nonvesicular lipid trafficking between the ER and mitochondria. The MDM12-MMM1 subcomplex functions in the major beta-barrel assembly pathway that is responsible for biogenesis of all outer membrane beta-barrel proteins, and acts in a late step after the SAM complex. The MDM10-MDM12-MMM1 subcomplex further acts in the TOM40-specific pathway after the action of the MDM12-MMM1 complex. Essential for establishing and maintaining the structure of mitochondria and maintenance of mtDNA nucleoids. This is Maintenance of mitochondrial morphology protein 1 from Paracoccidioides lutzii (strain ATCC MYA-826 / Pb01) (Paracoccidioides brasiliensis).